The primary structure comprises 62 residues: Conotoxin Qc5.1 (62 aa).

A signal peptide spans 1 to 22 (MRCVPVFIILLLLSPSAPSVDA). A propeptide spanning residues 23 to 48 (HPMTKDDVPQASFHDDAKRTLQVPWM) is cleaved from the precursor. Val-60 bears the Valine amide mark.

Belongs to the conotoxin T superfamily. Contains 2 disulfide bonds that can be either 'C1-C3, C2-C4' or 'C1-C4, C2-C3', since these disulfide connectivities have been observed for conotoxins with cysteine framework V (for examples, see AC P0DQQ7 and AC P81755). As to expression, expressed by the venom duct.

It is found in the secreted. This chain is Conotoxin Qc5.1, found in Conus quercinus (Oak cone).